Reading from the N-terminus, the 206-residue chain is dCTP deaminase, dUMP-forming (206 aa).

DCTP-binding positions include 117–122, Asp-135, 143–145, Gln-163, Tyr-177, Lys-184, and Gln-188; these read RSSFGR and TLE. Residue Glu-145 is the Proton donor/acceptor of the active site.

It belongs to the dCTP deaminase family. In terms of assembly, homotrimer.

The catalysed reaction is dCTP + 2 H2O = dUMP + NH4(+) + diphosphate. It functions in the pathway pyrimidine metabolism; dUMP biosynthesis; dUMP from dCTP: step 1/1. In terms of biological role, bifunctional enzyme that catalyzes both the deamination of dCTP to dUTP and the hydrolysis of dUTP to dUMP without releasing the toxic dUTP intermediate. In Methanococcus maripaludis (strain C6 / ATCC BAA-1332), this protein is dCTP deaminase, dUMP-forming.